Reading from the N-terminus, the 466-residue chain is Asparagine--tRNA ligase (466 aa).

It belongs to the class-II aminoacyl-tRNA synthetase family. As to quaternary structure, homodimer.

The protein resides in the cytoplasm. It catalyses the reaction tRNA(Asn) + L-asparagine + ATP = L-asparaginyl-tRNA(Asn) + AMP + diphosphate + H(+). This is Asparagine--tRNA ligase from Salmonella typhimurium (strain LT2 / SGSC1412 / ATCC 700720).